A 361-amino-acid polypeptide reads, in one-letter code: Phenylalanine--tRNA ligase alpha subunit (361 aa).

Mg(2+) is bound at residue E260.

This sequence belongs to the class-II aminoacyl-tRNA synthetase family. Phe-tRNA synthetase alpha subunit type 1 subfamily. Tetramer of two alpha and two beta subunits. Requires Mg(2+) as cofactor.

The protein localises to the cytoplasm. The catalysed reaction is tRNA(Phe) + L-phenylalanine + ATP = L-phenylalanyl-tRNA(Phe) + AMP + diphosphate + H(+). The polypeptide is Phenylalanine--tRNA ligase alpha subunit (Bartonella henselae (strain ATCC 49882 / DSM 28221 / CCUG 30454 / Houston 1) (Rochalimaea henselae)).